The primary structure comprises 1019 residues: MAVKCFSLYLILAAIVIGGVTSEYIEYNTKPRIVPEKINVHLVPHSHDDVGWLKTVDQYYVGSNNSIRGACVQNVLDSVIASLLDDENRKFIYVEMAFFQRWWRQQSNAKKVKVKKLVDSGQLEFINGGMCMHDEATPHYIDMIDQTTLGHQFIKTEFGQVPRVGWQIDPFGHSAVQAYLLGAEFGFDSLFFARIDYQDRAKRLREKTLEVIWQGSKSLGSSSQIFTGVFPRHYDPPEGFTFEINDVSAPIQDDPLLFDYNVQERVNDFVAAALAQVNVTRTNHIMWLMGTDFRYQYAYSWFRQIDKFIHYVNKDGRLNVLYSTPSIYTDAKYAANESWPLKTDDFFPYADKPNAYWTGYFTSRPAFKKYVRDLSGYYLAARQLEFLRGRDSSGPTTDMLADALAIAQHHDAVSGTQRQHVAADYALRLSMGYLQAEKLVASSLSFLSAAKSSTEKKNPGTKFQQCPLLNISYCPASEARLLSGKSLVVVVYNSLGWKREEVVRVPVSSENVIVKDASGKEVVFQLLPLSEIALRIRNEYVKAYLGRSPRDTAKHVLAFTASVPPLGFSSYVISDTGRTARGLSASYVTSGSMNQNVEVGQGNLKLRYSEEGVKITRHLSTKNQVTAEQSYAYYIGSNGTDKDPQASGAYVFRPDGVLPIKSKEEAQLTIVQGPLFDEVHQELNSWISQITRVYKGKNHAEIEFTIGPIPADDGISKEIITKLTTTMKTNGTFYTDSNGRDFIKRIRDFRTDWDLQVYQPVAGNYYPLNLGIYMQDKTSELSVLVDRAVGGSSLENGQIELMLHRRMQHDDIRGVGEILNETVCLPEGCKGLTIQGKFYVQIDKPGDGAKWRRTFGQEIYSPLLIAFTEQEGDSWINSHKTTFSAFEPSYSLPKNVALLTLQELENGEVLLRLAHLFEVGEDSEYSVMAKVELKKLFHNKKIREVKETSLSGNQEKAEMEKRRLIWKVEGSAGEEVKRGEAVDAEKLVVELVPMEIRTLLIKFDDQIEMVGDKEQQHRL.

A signal peptide spans 1 to 22 (MAVKCFSLYLILAAIVIGGVTS). 2 residues coordinate Zn(2+): histidine 47 and aspartate 49. N-linked (GlcNAc...) asparagine glycosylation occurs at asparagine 64. Aspartate 169 is a Zn(2+) binding site. Asparagine 278 and asparagine 336 each carry an N-linked (GlcNAc...) asparagine glycan. Zn(2+) is bound at residue histidine 410. Cysteine 466 and cysteine 474 are oxidised to a cystine. N-linked (GlcNAc...) asparagine glycosylation is found at asparagine 470, asparagine 638, asparagine 730, and asparagine 820. A disulfide bridge links cysteine 824 with cysteine 829.

It belongs to the glycosyl hydrolase 38 family. As to quaternary structure, homodimer. Zn(2+) is required as a cofactor.

The enzyme catalyses Hydrolysis of terminal, non-reducing alpha-D-mannose residues in alpha-D-mannosides.. Its function is as follows. Liberates mannose from p-nitrophenyl-alpha-D-mannoside in vitro. This Arabidopsis thaliana (Mouse-ear cress) protein is Alpha-mannosidase At3g26720.